Consider the following 319-residue polypeptide: Acetyl-coenzyme A carboxylase carboxyl transferase subunit beta (319 aa).

Residues L24 to A293 form the CoA carboxyltransferase N-terminal domain. Residues P282–A319 are disordered.

Belongs to the AccD/PCCB family. As to quaternary structure, acetyl-CoA carboxylase is a heterohexamer composed of biotin carboxyl carrier protein (AccB), biotin carboxylase (AccC) and two subunits each of ACCase subunit alpha (AccA) and ACCase subunit beta (AccD).

The protein resides in the cytoplasm. It carries out the reaction N(6)-carboxybiotinyl-L-lysyl-[protein] + acetyl-CoA = N(6)-biotinyl-L-lysyl-[protein] + malonyl-CoA. The protein operates within lipid metabolism; malonyl-CoA biosynthesis; malonyl-CoA from acetyl-CoA: step 1/1. In terms of biological role, component of the acetyl coenzyme A carboxylase (ACC) complex. Biotin carboxylase (BC) catalyzes the carboxylation of biotin on its carrier protein (BCCP) and then the CO(2) group is transferred by the transcarboxylase to acetyl-CoA to form malonyl-CoA. The polypeptide is Acetyl-coenzyme A carboxylase carboxyl transferase subunit beta (Nitrobacter winogradskyi (strain ATCC 25391 / DSM 10237 / CIP 104748 / NCIMB 11846 / Nb-255)).